The following is a 147-amino-acid chain: ATP synthase epsilon chain 2 (147 aa).

Belongs to the ATPase epsilon chain family. F-type ATPases have 2 components, CF(1) - the catalytic core - and CF(0) - the membrane proton channel. CF(1) has five subunits: alpha(3), beta(3), gamma(1), delta(1), epsilon(1). CF(0) has three main subunits: a, b and c.

Its subcellular location is the cell inner membrane. Produces ATP from ADP in the presence of a proton gradient across the membrane. The chain is ATP synthase epsilon chain 2 from Photobacterium profundum (strain SS9).